Here is a 237-residue protein sequence, read N- to C-terminus: MVIMLIFASSTGTILPSKKAKSMEKDFSIFQGNKLNLKYKRQREEVMQKKHRLIFLATVLAGLILFYFGVDTWMKQKQVQQNQPPPIVIKPVAPVKPKTQESNQTTKKEVKQEEQKKEEPKKMVQKQETQEKREVKKSEKNEVKQTQEKKDVKVAKKVPKTEKKAANLRTYKFQVGAFRYRENAYKMAKIVRSKGFDAQVVKVGSLYRVYAYVKAKNYWEAKREIKKHFKDAIFVRK.

A helical transmembrane segment spans residues 53–70 (LIFLATVLAGLILFYFGV). The interval 85–155 (PPIVIKPVAP…TQEKKDVKVA (71 aa)) is disordered. Positions 98-157 (KTQESNQTTKKEVKQEEQKKEEPKKMVQKQETQEKREVKKSEKNEVKQTQEKKDVKVAKK) form a coiled coil. Composition is skewed to basic and acidic residues over residues 106–122 (TKKE…EPKK) and 128–155 (ETQE…VKVA). The 73-residue stretch at 165-237 (AANLRTYKFQ…HFKDAIFVRK (73 aa)) folds into the SPOR domain.

It is found in the membrane. This is an uncharacterized protein from Aquifex aeolicus (strain VF5).